A 101-amino-acid chain; its full sequence is Urease subunit beta (101 aa).

The protein belongs to the urease beta subunit family. As to quaternary structure, heterotrimer of UreA (gamma), UreB (beta) and UreC (alpha) subunits. Three heterotrimers associate to form the active enzyme.

It is found in the cytoplasm. It carries out the reaction urea + 2 H2O + H(+) = hydrogencarbonate + 2 NH4(+). It functions in the pathway nitrogen metabolism; urea degradation; CO(2) and NH(3) from urea (urease route): step 1/1. This is Urease subunit beta from Bradyrhizobium sp. (strain ORS 278).